Reading from the N-terminus, the 59-residue chain is UPF0434 protein HEAR2489 (59 aa).

It belongs to the UPF0434 family.

In Herminiimonas arsenicoxydans, this protein is UPF0434 protein HEAR2489.